We begin with the raw amino-acid sequence, 814 residues long: DNA replication licensing factor Mcm6 (814 aa).

Residues 152-179 (CLDCQTEIRDVEQQFKFTNPTICRNPVC) form a C4-type zinc finger. The 207-residue stretch at 339–545 (LYQNLINSLF…VVDYAIARKI (207 aa)) folds into the MCM domain. ATP is bound by residues S392, T393, A394, K395, S396, and N497. An Arginine finger motif is present at residues 521–524 (SRFD). 2 residues coordinate ADP: R612 and E615. Residues 656–696 (DIHLDEEEGEENENVMDIGEETPEDTPRTNETEENDQDTPA) are disordered. A compositionally biased stretch (acidic residues) spans 659 to 679 (LDEEEGEENENVMDIGEETPE).

It belongs to the MCM family. As to quaternary structure, component of the Mcm2-7 complex. The complex forms a toroidal hexameric ring with the proposed subunit order Mcm2-Mcm6-Mcm4-Mcm7-Mcm3-Mcm5 (By simililarity). The heterodimers of Mcm4/Mcm6 and Mcm3/Mcm5 interact with Mcm2 and Mcm7.

It localises to the nucleus. The catalysed reaction is ATP + H2O = ADP + phosphate + H(+). Its function is as follows. Acts as a component of the MCM2-7 complex (MCM complex) which is the replicative helicase essential for 'once per cell cycle' DNA replication initiation and elongation in eukaryotic cells. Core component of CDC45-MCM-GINS (CMG) helicase, the molecular machine that unwinds template DNA during replication, and around which the replisome is built. The active ATPase sites in the MCM2-7 ring are formed through the interaction surfaces of two neighboring subunits such that a critical structure of a conserved arginine finger motif is provided in trans relative to the ATP-binding site of the Walker A box of the adjacent subunit. The six ATPase active sites, however, are likely to contribute differentially to the complex helicase activity. This is DNA replication licensing factor Mcm6 from Anopheles gambiae (African malaria mosquito).